The primary structure comprises 143 residues: Glutaredoxin-2 (143 aa).

The N-terminal 30 residues, 1-30 (METNFSFDSNLIVIIIITLFATRIIAKRFL), are a transit peptide targeting the mitochondrion. S37 carries the post-translational modification Phosphoserine. The region spanning 41 to 143 (VAHVKDLIGQ…LAEILKPVFQ (103 aa)) is the Glutaredoxin domain. 58–63 (KTYCPY) contributes to the glutathione binding site. C61 is modified (S-glutathionyl cysteine; alternate). C61 and C64 form a disulfide bridge. The residue at position 91 (S91) is a Phosphoserine. Residues V109 and 122 to 123 (NS) contribute to the glutathione site.

Belongs to the glutaredoxin family.

Its subcellular location is the cytoplasm. The protein localises to the mitochondrion. It carries out the reaction 2 glutathione + H2O2 = glutathione disulfide + 2 H2O. It catalyses the reaction 1-chloro-2,4-dinitrobenzene + glutathione = 2,4-dinitrophenyl-S-glutathione + chloride + H(+). The enzyme catalyses RX + glutathione = an S-substituted glutathione + a halide anion + H(+). Component of the glutathione system which performs several activities such as glutathione-dependent oxidoreductase, glutathione peroxidase and glutathione S-transferase (GST) activity. The disulfide bond functions as an electron carrier in the glutathione-dependent synthesis of deoxyribonucleotides by the enzyme ribonucleotide reductase. In addition, it is also involved in reducing cytosolic protein- and non-protein-disulfides in a coupled system with glutathione reductase. Required for resistance to reactive oxygen species (ROS) by directly reducing hydroperoxides and for the detoxification of ROS-mediated damage. GRX2 is more active as an oxidoreductase than GRX1. Responsible for the S-glutathionylation of DHBP synthase. This is Glutaredoxin-2 (GRX2) from Saccharomyces cerevisiae (strain ATCC 204508 / S288c) (Baker's yeast).